The sequence spans 356 residues: TPR repeat-containing protein P27G11.02 (356 aa).

The transit peptide at 1–20 directs the protein to the mitochondrion; it reads MRMQWIWKSRRSLQNVFIRR. 2 TPR repeats span residues 194–227 and 290–323; these read SRLF…TMAN and AAAF…RKDD.

It is found in the mitochondrion. The sequence is that of TPR repeat-containing protein P27G11.02 from Schizosaccharomyces pombe (strain 972 / ATCC 24843) (Fission yeast).